The chain runs to 379 residues: MNQAVIVAAKRTAFGKYGGTLKHLEPEQLLKPLFQHFKEKYPEVISKIDDVVLGNVVGNGGNIARKALLEAGLKDSIPGVTIDRQCGSGLESVQYACRMIQAGAGKVYIAGGVESTSRAPWKIKRPHSVYETALPEFYERASFAPEMSDPSMIQGAENVAKMYGVSRELQDEFAYRSHQLTAENVKNGNISQEILPITVKGELFNTDESLKSHIPKDNFGRFKPVIKGGTVTAANSCMKNDGAVLLLIMEKDMAYELGFDHGLLFKDGVTVGVDSNLPGIGPVPAISNLLKRNQLTIENIEVIEINEAFSAQVVACQQALNISNTQLNIWGGALASGHPYGASGAQLVTRLFYMFDKESMIASMGIGGGLGNAALFTRF.

Residue C86 is the Acyl-thioester intermediate of the active site. H338 functions as the Proton acceptor in the catalytic mechanism.

Belongs to the thiolase-like superfamily. Thiolase family.

The chain is Putative acetyl-CoA C-acetyltransferase VraB (vraB) from Staphylococcus aureus (strain MRSA252).